The following is a 284-amino-acid chain: MAIIMDGKALAVNMQEQLQEKVARLKEKEWIVPGLVVIMVGENPASQVYVRNKERAAKKAGFHSKTVNLSESISEEELIEVIEKYNQNPLFHGILVQLPLPNHINEMRILLAIDPKKDVDGFHPMNTGNLWNGRPQMVPCTPAGIMEILREYNVELEGKTAVIIGRSNIVGKPMAQLLLEKNATVTLTHSRTPHLAKVCNKADVLIVAIGRAKFVTEEFVKEGAVVIDVGINRDEEGKLCGDVDFDQVKEKVSMITPVPGGVGPMTITMLMEQTYQAALRSLKG.

Residues 165 to 167, S190, and I231 contribute to the NADP(+) site; that span reads GRS.

It belongs to the tetrahydrofolate dehydrogenase/cyclohydrolase family. In terms of assembly, homodimer.

The catalysed reaction is (6R)-5,10-methylene-5,6,7,8-tetrahydrofolate + NADP(+) = (6R)-5,10-methenyltetrahydrofolate + NADPH. It catalyses the reaction (6R)-5,10-methenyltetrahydrofolate + H2O = (6R)-10-formyltetrahydrofolate + H(+). Its pathway is one-carbon metabolism; tetrahydrofolate interconversion. In terms of biological role, catalyzes the oxidation of 5,10-methylenetetrahydrofolate to 5,10-methenyltetrahydrofolate and then the hydrolysis of 5,10-methenyltetrahydrofolate to 10-formyltetrahydrofolate. This Streptococcus thermophilus (strain CNRZ 1066) protein is Bifunctional protein FolD.